Reading from the N-terminus, the 157-residue chain is Ribosomal RNA large subunit methyltransferase H (157 aa).

Residues Leu74, Gly106, and 125 to 130 (LGNITF) each bind S-adenosyl-L-methionine.

Belongs to the RNA methyltransferase RlmH family. As to quaternary structure, homodimer.

Its subcellular location is the cytoplasm. It carries out the reaction pseudouridine(1915) in 23S rRNA + S-adenosyl-L-methionine = N(3)-methylpseudouridine(1915) in 23S rRNA + S-adenosyl-L-homocysteine + H(+). Its function is as follows. Specifically methylates the pseudouridine at position 1915 (m3Psi1915) in 23S rRNA. The chain is Ribosomal RNA large subunit methyltransferase H from Lawsonia intracellularis (strain PHE/MN1-00).